Reading from the N-terminus, the 529-residue chain is Bifunctional purine biosynthesis protein PurH (529 aa).

One can recognise an MGS-like domain in the interval 1–148 (MQQRRPVRRA…KNHKDVAIVV (148 aa)).

The protein belongs to the PurH family.

The enzyme catalyses (6R)-10-formyltetrahydrofolate + 5-amino-1-(5-phospho-beta-D-ribosyl)imidazole-4-carboxamide = 5-formamido-1-(5-phospho-D-ribosyl)imidazole-4-carboxamide + (6S)-5,6,7,8-tetrahydrofolate. It catalyses the reaction IMP + H2O = 5-formamido-1-(5-phospho-D-ribosyl)imidazole-4-carboxamide. Its pathway is purine metabolism; IMP biosynthesis via de novo pathway; 5-formamido-1-(5-phospho-D-ribosyl)imidazole-4-carboxamide from 5-amino-1-(5-phospho-D-ribosyl)imidazole-4-carboxamide (10-formyl THF route): step 1/1. The protein operates within purine metabolism; IMP biosynthesis via de novo pathway; IMP from 5-formamido-1-(5-phospho-D-ribosyl)imidazole-4-carboxamide: step 1/1. This is Bifunctional purine biosynthesis protein PurH from Salmonella heidelberg (strain SL476).